The chain runs to 647 residues: Macrolide export ATP-binding/permease protein MacB 2 (647 aa).

Residues 6-244 (IQLKGIERRY…VTPTAAPAGK (239 aa)) form the ABC transporter domain. Residue 42–49 (GASGSGKS) coordinates ATP. The tract at residues 223–247 (QEDSGRKPAAVPVTPTAAPAGKEGV) is disordered. Residues 230-242 (PAAVPVTPTAAPA) are compositionally biased toward low complexity. A run of 4 helical transmembrane segments spans residues 273 to 293 (FLTM…VALG), 527 to 547 (IAVI…LVSV), 581 to 601 (LGGM…SLFV), and 610 to 630 (LFSI…FGYL).

This sequence belongs to the ABC transporter superfamily. Macrolide exporter (TC 3.A.1.122) family. Homodimer. Part of the tripartite efflux system MacAB-TolC, which is composed of an inner membrane transporter, MacB, a periplasmic membrane fusion protein, MacA, and an outer membrane component, TolC. The complex forms a large protein conduit and can translocate molecules across both the inner and outer membranes. Interacts with MacA.

The protein resides in the cell inner membrane. Its function is as follows. Part of the tripartite efflux system MacAB-TolC. MacB is a non-canonical ABC transporter that contains transmembrane domains (TMD), which form a pore in the inner membrane, and an ATP-binding domain (NBD), which is responsible for energy generation. Confers resistance against macrolides. The polypeptide is Macrolide export ATP-binding/permease protein MacB 2 (Aeromonas hydrophila subsp. hydrophila (strain ATCC 7966 / DSM 30187 / BCRC 13018 / CCUG 14551 / JCM 1027 / KCTC 2358 / NCIMB 9240 / NCTC 8049)).